The primary structure comprises 313 residues: Homoserine O-acetyltransferase (313 aa).

The Acyl-thioester intermediate role is filled by cysteine 142. Residues lysine 163 and serine 191 each contribute to the substrate site. Histidine 234 acts as the Proton acceptor in catalysis. The active site involves glutamate 236. Residue arginine 248 coordinates substrate.

The protein belongs to the MetA family.

The protein resides in the cytoplasm. It carries out the reaction L-homoserine + acetyl-CoA = O-acetyl-L-homoserine + CoA. It functions in the pathway amino-acid biosynthesis; L-methionine biosynthesis via de novo pathway; O-acetyl-L-homoserine from L-homoserine: step 1/1. Transfers an acetyl group from acetyl-CoA to L-homoserine, forming acetyl-L-homoserine. In Streptococcus gordonii (strain Challis / ATCC 35105 / BCRC 15272 / CH1 / DL1 / V288), this protein is Homoserine O-acetyltransferase.